The primary structure comprises 115 residues: NAD(P)H-quinone oxidoreductase subunit M (115 aa).

This sequence belongs to the complex I NdhM subunit family. NDH-1 can be composed of about 15 different subunits; different subcomplexes with different compositions have been identified which probably have different functions.

It is found in the cellular thylakoid membrane. The catalysed reaction is a plastoquinone + NADH + (n+1) H(+)(in) = a plastoquinol + NAD(+) + n H(+)(out). It carries out the reaction a plastoquinone + NADPH + (n+1) H(+)(in) = a plastoquinol + NADP(+) + n H(+)(out). Its function is as follows. NDH-1 shuttles electrons from an unknown electron donor, via FMN and iron-sulfur (Fe-S) centers, to quinones in the respiratory and/or the photosynthetic chain. The immediate electron acceptor for the enzyme in this species is believed to be plastoquinone. Couples the redox reaction to proton translocation, and thus conserves the redox energy in a proton gradient. Cyanobacterial NDH-1 also plays a role in inorganic carbon-concentration. In Prochlorococcus marinus (strain MIT 9313), this protein is NAD(P)H-quinone oxidoreductase subunit M.